A 322-amino-acid chain; its full sequence is L-asparaginase (322 aa).

The Asparaginase/glutaminase domain maps to 3–322 (KKVALITTGG…KEGIKDKFCY (320 aa)). Thr-13 functions as the O-isoaspartyl threonine intermediate in the catalytic mechanism. Substrate contacts are provided by residues Ser-56 and 89–90 (TD).

The protein belongs to the asparaginase 1 family. In terms of assembly, homotetramer.

The protein localises to the cytoplasm. It catalyses the reaction L-asparagine + H2O = L-aspartate + NH4(+). This Bacillus licheniformis protein is L-asparaginase (ansA).